Here is a 536-residue protein sequence, read N- to C-terminus: Quinate permease (536 aa).

Residues methionine 1–alanine 26 lie on the Cytoplasmic side of the membrane. Residues isoleucine 27–alanine 47 traverse the membrane as a helical segment. The Extracellular segment spans residues leucine 48–serine 74. Residues valine 75 to glycine 95 form a helical membrane-spanning segment. The Cytoplasmic segment spans residues arginine 96–lysine 98. The chain crosses the membrane as a helical span at residues serine 99 to glycine 119. Residues glutamine 120–arginine 131 lie on the Extracellular side of the membrane. Residues valine 132 to leucine 152 form a helical membrane-spanning segment. The Cytoplasmic portion of the chain corresponds to alanine 153–arginine 160. A helical membrane pass occupies residues leucine 161–tyrosine 181. The Extracellular segment spans residues glycine 182–leucine 195. Asparagine 184 carries N-linked (GlcNAc...) asparagine glycosylation. Residues isoleucine 196–proline 216 form a helical membrane-spanning segment. The Cytoplasmic segment spans residues glutamate 217–arginine 285. The helical transmembrane segment at phenylalanine 286–tyrosine 306 threads the bilayer. Residues tyrosine 307–threonine 327 are Extracellular-facing. A helical transmembrane segment spans residues glycine 328 to valine 349. The Cytoplasmic segment spans residues glycine 350–arginine 352. The helical transmembrane segment at arginine 353–isoleucine 373 threads the bilayer. Topologically, residues lysine 374–threonine 389 are extracellular. A helical transmembrane segment spans residues serine 390 to tryptophan 410. The Cytoplasmic portion of the chain corresponds to asparagine 411–alanine 435. Residues alanine 436–methionine 456 traverse the membrane as a helical segment. Over glutamate 457–tyrosine 458 the chain is Extracellular. The chain crosses the membrane as a helical span at residues glycine 459–isoleucine 479. Topologically, residues proline 480–valine 536 are cytoplasmic. Basic and acidic residues predominate over residues proline 516–threonine 530. The interval proline 516–valine 536 is disordered.

It belongs to the major facilitator superfamily. Sugar transporter (TC 2.A.1.1) family.

The protein localises to the membrane. The protein is Quinate permease (qa-y) of Neurospora terricola.